A 312-amino-acid polypeptide reads, in one-letter code: Deoxycytidylate deaminase (312 aa).

In terms of domain architecture, CMP/dCMP-type deaminase spans 162–291; it reads SWDSYFMKLA…RMDEESFKVL (130 aa). Residue His-233 participates in Zn(2+) binding. Residue Glu-235 is the Proton donor of the active site. Zn(2+)-binding residues include Cys-260 and Cys-263.

Belongs to the cytidine and deoxycytidylate deaminase family. The cofactor is Zn(2+).

It carries out the reaction dCMP + H2O + H(+) = dUMP + NH4(+). Its activity is regulated as follows. Allosteric enzyme whose activity is greatly influenced by the end products of its metabolic pathway, dCTP and dTTP. Its function is as follows. Catalyzes the hydrolytic deamination of dCMP to yield dUMP, the nucleotide substrate for thymidylate synthetase. In Saccharomyces cerevisiae (strain ATCC 204508 / S288c) (Baker's yeast), this protein is Deoxycytidylate deaminase.